The sequence spans 503 residues: Alpha-1B-glycoprotein (503 aa).

The N-terminal stretch at 1-21 is a signal peptide; that stretch reads MSAWAALLLLWGLSLSPVTEQ. Ig-like V-type domains lie at 27-115, 117-204, 208-305, 307-405, and 406-501; these read PRPS…EVTG, EPLP…TVTI, DPPP…LVLS, GTLP…LRVD, and GPLP…LRVA. Cysteines 49 and 96 form a disulfide. 2 N-linked (GlcNAc...) asparagine glycosylation sites follow: asparagine 137 and asparagine 182. 4 disulfide bridges follow: cysteine 142–cysteine 185, cysteine 235–cysteine 282, cysteine 333–cysteine 382, and cysteine 431–cysteine 478. Asparagine 379 is a glycosylation site (N-linked (GlcNAc...) asparagine).

Interacts with CRISP3. Plasma.

The protein localises to the secreted. This Bos taurus (Bovine) protein is Alpha-1B-glycoprotein.